The sequence spans 126 residues: Large-conductance mechanosensitive channel (126 aa).

Helical transmembrane passes span 8–28 (FAMRGNVIDLAVAVVLGAAFT) and 70–90 (IQQIVSFFLIAIALFLIVKVI).

Belongs to the MscL family. As to quaternary structure, homopentamer.

The protein resides in the cell membrane. Channel that opens in response to stretch forces in the membrane lipid bilayer. May participate in the regulation of osmotic pressure changes within the cell. The sequence is that of Large-conductance mechanosensitive channel from Exiguobacterium sp. (strain ATCC BAA-1283 / AT1b).